We begin with the raw amino-acid sequence, 135 residues long: uncharacterized protein (135 aa).

Positions 25 to 123 constitute an HTH hxlR-type domain; the sequence is CPIQHVVDLL…LGSDWLEQES (99 aa).

This is an uncharacterized protein from Synechocystis sp. (strain ATCC 27184 / PCC 6803 / Kazusa).